The primary structure comprises 232 residues: Ashwin (232 aa).

Composition is skewed to basic and acidic residues over residues 64 to 97 and 116 to 127; these read DLPK…DGLR and KKTENGDNDRLR. Residues 64-232 are disordered; the sequence is DLPKSRWGKM…KRKIQHVTWP (169 aa). Residues 130-140 show a composition bias toward polar residues; the sequence is PQASATSNTFR. At Ser-143 the chain carries Phosphoserine. Over residues 144 to 156 the composition is skewed to low complexity; sequence DSSSSVSPLVLSS. Over residues 163-179 the composition is skewed to basic and acidic residues; the sequence is KMEHGNNDNKQNHDLTH. 3 positions are modified to phosphoserine: Ser-182, Ser-189, and Ser-193. Thr-198 is subject to Phosphothreonine.

The protein belongs to the ashwin family. Component of the tRNA-splicing ligase complex.

It is found in the nucleus. The polypeptide is Ashwin (Bos taurus (Bovine)).